A 407-amino-acid polypeptide reads, in one-letter code: Deacetylase Atu3266 (407 aa).

The Zn(2+) site is built by histidine 75, histidine 77, lysine 173, histidine 206, histidine 229, and aspartate 289. Lysine 173 is subject to N6-carboxylysine.

The protein belongs to the metallo-dependent hydrolases superfamily. Atu3266/EF_0837 deacetylase family. In terms of assembly, homohexamer, dimer of trimers. Zn(2+) is required as a cofactor.

In terms of biological role, esterase that catalyzes the deacetylation of acetyl-(R)-mandelate (in vitro). Can also hydrolyze acetyl glycolate, but with lower efficiency. Has very low N-acetyl-D-amino acid deacetylase activity with N-acetyl-D-serine and N-acetyl-D-threonine (in vitro). Theoretical substrate docking studies suggest that other N-acetylated amino acids may optimally occupy the active site and may in fact be the physiological substrates. This is Deacetylase Atu3266 from Agrobacterium fabrum (strain C58 / ATCC 33970) (Agrobacterium tumefaciens (strain C58)).